The following is a 404-amino-acid chain: Spore development regulator RYP2 (404 aa).

Disordered stretches follow at residues 1–46 (MSAP…RKAV), 200–231 (LLKR…SSQQ), and 382–404 (SGQS…PAWG). The Velvet domain maps to 17–194 (LQSADFRLTV…ADQGVKLRIR (178 aa)). Over residues 29-46 (NPERARVAGGKEKERKAV) the composition is skewed to basic and acidic residues. The segment covering 382-397 (SGQSFSQSAGHMQSPS) has biased composition (polar residues).

Belongs to the velvet family. VosA subfamily. As to quaternary structure, forms a heterodimeric complex with RYP3; the formation of the RYP2-RYP3 complex is light-dependent.

Its subcellular location is the nucleus. In terms of biological role, component of the RYP2-RYP3 heterodimeric complex that plays a dual role in activating genes associated with spore maturation and repressing certain development-associated genes. The complex binds DNA through the DNA-binding domain of vosA that recognizes an 11-nucleotide consensus sequence 5'-CTGGCCGCGGC-3' consisting of two motifs in the promoters of key developmental regulatory genes. Required for viable spore production and regulation of sporulation in response to temperature and for the switch to yeast-form in the presence of host cells. The chain is Spore development regulator RYP2 from Ajellomyces capsulatus (Darling's disease fungus).